Here is a 336-residue protein sequence, read N- to C-terminus: Biotin synthase (336 aa).

A Radical SAM core domain is found at 55–288 (GEAASLHACS…RTIIKFAAGR (234 aa)). [4Fe-4S] cluster is bound by residues C73, C77, and C80. [2Fe-2S] cluster contacts are provided by C152, C213, and K283.

It belongs to the radical SAM superfamily. Biotin synthase family. Homodimer. It depends on [4Fe-4S] cluster as a cofactor. [2Fe-2S] cluster serves as cofactor.

The enzyme catalyses (4R,5S)-dethiobiotin + (sulfur carrier)-SH + 2 reduced [2Fe-2S]-[ferredoxin] + 2 S-adenosyl-L-methionine = (sulfur carrier)-H + biotin + 2 5'-deoxyadenosine + 2 L-methionine + 2 oxidized [2Fe-2S]-[ferredoxin]. Its pathway is cofactor biosynthesis; biotin biosynthesis; biotin from 7,8-diaminononanoate: step 2/2. Catalyzes the conversion of dethiobiotin (DTB) to biotin by the insertion of a sulfur atom into dethiobiotin via a radical-based mechanism. The polypeptide is Biotin synthase (Chlorobium limicola (strain DSM 245 / NBRC 103803 / 6330)).